A 1000-amino-acid polypeptide reads, in one-letter code: uncharacterized protein (1000 aa).

Basic and acidic residues predominate over residues 787–809; sequence RQYEKLKRQRAKSETERHQERHG. Residues 787-812 are disordered; it reads RQYEKLKRQRAKSETERHQERHGKLS.

This is an uncharacterized protein from Picosynechococcus sp. (strain ATCC 27264 / PCC 7002 / PR-6) (Agmenellum quadruplicatum).